A 1477-amino-acid polypeptide reads, in one-letter code: Neurexin-1 (1477 aa).

Residues Met1 to Gly30 form the signal peptide. The 187-residue stretch at Leu31–Cys217 folds into the Laminin G-like 1 domain. The Extracellular portion of the chain corresponds to Leu31–Thr1401. Residues Asn125 and Asn190 are each glycosylated (N-linked (GlcNAc...) asparagine). The segment at Asp198 to Glu221 is disordered. Residues Gly213 to Ser256 enclose the EGF-like 1 domain. Cystine bridges form between Cys228–Cys243 and Cys245–Cys255. Laminin G-like domains follow at residues Ile283–Cys473 and Asp480–Cys672. Residues Asp329, Leu346, and Met407 each coordinate Ca(2+). Intrachain disulfides connect Cys437–Cys473, Cys643–Cys672, Cys680–Cys691, Cys685–Cys700, and Cys702–Cys712. Positions Thr676–Glu713 constitute an EGF-like 2 domain. 2 Laminin G-like domains span residues Val718–Cys891 and Asp905–Cys1080. Asp765 and Leu782 together coordinate Ca(2+). The N-linked (GlcNAc...) asparagine glycan is linked to Asn790. Arg841 contacts Ca(2+). 5 disulfides stabilise this stretch: Cys883/Cys891, Cys1052/Cys1080, Cys1087/Cys1098, Cys1092/Cys1107, and Cys1109/Cys1119. An EGF-like 3 domain is found at Pro1083–Asn1120. The region spanning Tyr1126 to Val1294 is the Laminin G-like 6 domain. Ca(2+)-binding residues include Asp1176 and Val1193. A glycan (N-linked (GlcNAc...) asparagine) is linked at Asn1223. Ca(2+) is bound by residues Ile1245 and Asn1247. Positions Thr1325 to Ser1390 are disordered. Ser1355 carries O-linked (Xyl...) (heparan sulfate) serine glycosylation. The chain crosses the membrane as a helical span at residues Gly1402–Met1422. Residues Tyr1423–Val1477 lie on the Cytoplasmic side of the membrane. Residues Asn1444–Asn1470 are interaction with CASK. Residues Asn1444–Val1477 are disordered.

Belongs to the neurexin family. In terms of assembly, interacts (via laminin G-like domain 2 and/or laminin G-like domain 6) with NLGN1 forming a heterotetramer, where one NLGN1 dimer interacts with one NRXN1 dimer. Also interacts (via laminin G-like domain 2 and/or laminin G-like domain 6) with NLGN2, NLGN3 and NLGN4L; interactions with NLGN1, NLGN2, NLGN3 and NLGN4L are calcium-dependent. Interacts (via cytoplasmic C-terminal region) with CASK (via the PDZ, SH3 and guanylate kinase-like domains). Interacts (via cytoplasmic C-terminus) with CASKIN1 and APBA1. Interacts (via laminin G-like domain 2) with NXPH1 and NXPH3. Alpha-type isoforms (neurexin-1-alpha) interact (via laminin G-like domain 2 and/or laminin G-like domain 6) with DAG1 (via alpha-dystroglycan chain). Interacts with LRRTM1, LRRTM2, LRRTM3 and LRRTM4. Interacts with SYT13 and SYTL1. Interacts with CBLN1, CBLN2 and, less avidly, with CBLN4. Interacts with CLSTN3. Post-translationally, O-glycosylated; contains heparan sulfate. Heparan sulfate attachment is required for synapse development by mediating interactions with neuroligins and LRRTM2. In terms of tissue distribution, brain.

The protein resides in the presynaptic cell membrane. Cell surface protein involved in cell-cell-interactions, exocytosis of secretory granules and regulation of signal transmission. Function is isoform-specific. Alpha-type isoforms have a long N-terminus with six laminin G-like domains and play an important role in synaptic signal transmission. Alpha-type isoforms play a role in the regulation of calcium channel activity and Ca(2+)-triggered neurotransmitter release at synapses and at neuromuscular junctions. They play an important role in Ca(2+)-triggered exocytosis of secretory granules in pituitary gland. They may affect their functions at synapses and in endocrine cells via their interactions with proteins from the exocytotic machinery. Likewise, alpha-type isoforms play a role in regulating the activity of postsynaptic NMDA receptors, a subtype of glutamate-gated ion channels. Both alpha-type and beta-type isoforms may play a role in the formation or maintenance of synaptic junctions via their interactions (via the extracellular domains) with neuroligin family members, CBLN1 or CBLN2. In vitro, triggers the de novo formation of presynaptic structures. May be involved in specification of excitatory synapses. Alpha-type isoforms were first identified as receptors for alpha-latrotoxin from spider venom. The protein is Neurexin-1 (NRXN1) of Homo sapiens (Human).